Consider the following 398-residue polypeptide: Phosphopentomutase (398 aa).

Mn(2+) contacts are provided by aspartate 13, aspartate 290, histidine 295, aspartate 331, histidine 332, and histidine 343.

This sequence belongs to the phosphopentomutase family. Requires Mn(2+) as cofactor.

Its subcellular location is the cytoplasm. The catalysed reaction is 2-deoxy-alpha-D-ribose 1-phosphate = 2-deoxy-D-ribose 5-phosphate. The enzyme catalyses alpha-D-ribose 1-phosphate = D-ribose 5-phosphate. The protein operates within carbohydrate degradation; 2-deoxy-D-ribose 1-phosphate degradation; D-glyceraldehyde 3-phosphate and acetaldehyde from 2-deoxy-alpha-D-ribose 1-phosphate: step 1/2. Isomerase that catalyzes the conversion of deoxy-ribose 1-phosphate (dRib-1-P) and ribose 1-phosphate (Rib-1-P) to deoxy-ribose 5-phosphate (dRib-5-P) and ribose 5-phosphate (Rib-5-P), respectively. The polypeptide is Phosphopentomutase (Clostridium tetani (strain Massachusetts / E88)).